The primary structure comprises 299 residues: Putative adenosine/adenine deaminase (299 aa).

The Zn(2+) site is built by H16 and H18. 2 residues coordinate substrate: H18 and G157. Position 184 (H184) interacts with Zn(2+). Residue E187 is the Proton donor of the active site. D265 contacts Zn(2+). D266 is a substrate binding site.

This sequence belongs to the metallo-dependent hydrolases superfamily. Adenosine and AMP deaminases family. Requires Zn(2+) as cofactor.

In terms of biological role, putative nucleoside deaminase. May catalyze the hydrolytic deamination of adenosine or some similar substrate and play a role in purine metabolism. In Treponema pallidum (strain Nichols), this protein is Putative adenosine/adenine deaminase.